The following is a 391-amino-acid chain: Eukaryotic initiation factor 4A-3 (391 aa).

The Q motif motif lies at 18–46 (ASFAEMGIKDDLLRGVYQYGFEKPSAIQQ). Residues 49–219 (VLPIISGRDV…SKFMTDPVRI (171 aa)) form the Helicase ATP-binding domain. 62 to 69 (AQSGTGKT) contributes to the ATP binding site. Residues 167–170 (DESD) carry the DEAD box motif. Residues 230 to 391 (GIKQFFVAVE…EMPMNVADLI (162 aa)) enclose the Helicase C-terminal domain.

It belongs to the DEAD box helicase family. eIF4A subfamily. EIF4F is a multi-subunit complex, the composition of which varies with external and internal environmental conditions. It is composed of at least EIF4A, EIF4E and EIF4G.

It catalyses the reaction ATP + H2O = ADP + phosphate + H(+). In terms of biological role, ATP-dependent RNA helicase which is a subunit of the eIF4F complex involved in cap recognition and is required for mRNA binding to ribosome. In the current model of translation initiation, eIF4A unwinds RNA secondary structures in the 5'-UTR of mRNAs which is necessary to allow efficient binding of the small ribosomal subunit, and subsequent scanning for the initiator codon. The protein is Eukaryotic initiation factor 4A-3 of Nicotiana plumbaginifolia (Leadwort-leaved tobacco).